We begin with the raw amino-acid sequence, 248 residues long: 2,3-bisphosphoglycerate-dependent phosphoglycerate mutase (248 aa).

Residues 8 to 15 (RHGESTWN), 21 to 22 (TG), Arg-60, 87 to 90 (ERHY), Lys-98, 114 to 115 (RR), and 183 to 184 (GN) each bind substrate. Residue His-9 is the Tele-phosphohistidine intermediate of the active site. Glu-87 (proton donor/acceptor) is an active-site residue.

This sequence belongs to the phosphoglycerate mutase family. BPG-dependent PGAM subfamily. Homodimer.

The enzyme catalyses (2R)-2-phosphoglycerate = (2R)-3-phosphoglycerate. It functions in the pathway carbohydrate degradation; glycolysis; pyruvate from D-glyceraldehyde 3-phosphate: step 3/5. Catalyzes the interconversion of 2-phosphoglycerate and 3-phosphoglycerate. This chain is 2,3-bisphosphoglycerate-dependent phosphoglycerate mutase, found in Cupriavidus pinatubonensis (strain JMP 134 / LMG 1197) (Cupriavidus necator (strain JMP 134)).